The sequence spans 573 residues: Proline--tRNA ligase (573 aa).

Belongs to the class-II aminoacyl-tRNA synthetase family. ProS type 1 subfamily. In terms of assembly, homodimer.

It is found in the cytoplasm. The enzyme catalyses tRNA(Pro) + L-proline + ATP = L-prolyl-tRNA(Pro) + AMP + diphosphate. Its function is as follows. Catalyzes the attachment of proline to tRNA(Pro) in a two-step reaction: proline is first activated by ATP to form Pro-AMP and then transferred to the acceptor end of tRNA(Pro). As ProRS can inadvertently accommodate and process non-cognate amino acids such as alanine and cysteine, to avoid such errors it has two additional distinct editing activities against alanine. One activity is designated as 'pretransfer' editing and involves the tRNA(Pro)-independent hydrolysis of activated Ala-AMP. The other activity is designated 'posttransfer' editing and involves deacylation of mischarged Ala-tRNA(Pro). The misacylated Cys-tRNA(Pro) is not edited by ProRS. In Cupriavidus taiwanensis (strain DSM 17343 / BCRC 17206 / CCUG 44338 / CIP 107171 / LMG 19424 / R1) (Ralstonia taiwanensis (strain LMG 19424)), this protein is Proline--tRNA ligase.